The primary structure comprises 1083 residues: Carbamoyl phosphate synthase large chain (1083 aa).

Positions 1-402 (MPKRTDIRKV…AYMKALRSME (402 aa)) are carboxyphosphate synthetic domain. 12 residues coordinate ATP: arginine 129, arginine 169, glycine 175, glycine 176, glutamate 208, valine 210, glutamate 215, glycine 241, valine 242, histidine 243, glutamine 285, and glutamate 299. The ATP-grasp 1 domain occupies 133-328 (KAAMQKIGVA…IAKIAAKLAL (196 aa)). 3 residues coordinate Mg(2+): glutamine 285, glutamate 299, and asparagine 301. Residues glutamine 285, glutamate 299, and asparagine 301 each contribute to the Mn(2+) site. The tract at residues 403–554 (LGRVGLESPE…YSTYEEEDEA (152 aa)) is oligomerization domain. Residues 555-937 (PPTDRQKVLI…AFAKSQLAAG (383 aa)) form a carbamoyl phosphate synthetic domain region. The ATP-grasp 2 domain occupies 679-871 (AALIEKLGLK…MAKIAALCMV (193 aa)). Residues arginine 715, arginine 754, leucine 756, glutamate 761, glycine 787, valine 788, histidine 789, serine 790, glutamine 830, and glutamate 842 each coordinate ATP. Mg(2+) contacts are provided by glutamine 830, glutamate 842, and asparagine 844. Mn(2+)-binding residues include glutamine 830, glutamate 842, and asparagine 844. One can recognise an MGS-like domain in the interval 938-1078 (VKLPKSGKVF…QEYLGINAAP (141 aa)). Residues 938-1083 (VKLPKSGKVF…INAAPPGTRR (146 aa)) are allosteric domain.

This sequence belongs to the CarB family. Composed of two chains; the small (or glutamine) chain promotes the hydrolysis of glutamine to ammonia, which is used by the large (or ammonia) chain to synthesize carbamoyl phosphate. Tetramer of heterodimers (alpha,beta)4. Mg(2+) is required as a cofactor. Mn(2+) serves as cofactor.

The enzyme catalyses hydrogencarbonate + L-glutamine + 2 ATP + H2O = carbamoyl phosphate + L-glutamate + 2 ADP + phosphate + 2 H(+). The catalysed reaction is hydrogencarbonate + NH4(+) + 2 ATP = carbamoyl phosphate + 2 ADP + phosphate + 2 H(+). It participates in amino-acid biosynthesis; L-arginine biosynthesis; carbamoyl phosphate from bicarbonate: step 1/1. Its pathway is pyrimidine metabolism; UMP biosynthesis via de novo pathway; (S)-dihydroorotate from bicarbonate: step 1/3. Its function is as follows. Large subunit of the glutamine-dependent carbamoyl phosphate synthetase (CPSase). CPSase catalyzes the formation of carbamoyl phosphate from the ammonia moiety of glutamine, carbonate, and phosphate donated by ATP, constituting the first step of 2 biosynthetic pathways, one leading to arginine and/or urea and the other to pyrimidine nucleotides. The large subunit (synthetase) binds the substrates ammonia (free or transferred from glutamine from the small subunit), hydrogencarbonate and ATP and carries out an ATP-coupled ligase reaction, activating hydrogencarbonate by forming carboxy phosphate which reacts with ammonia to form carbamoyl phosphate. This is Carbamoyl phosphate synthase large chain from Myxococcus xanthus (strain DK1622).